The sequence spans 273 residues: Large ribosomal subunit protein uL2 (273 aa).

Disordered stretches follow at residues 28–54 and 221–273; these read KPYA…TRHI and RGTA…RRTK. Over residues 39-48 the composition is skewed to low complexity; that stretch reads KSGGRNNNGR.

The protein belongs to the universal ribosomal protein uL2 family. As to quaternary structure, part of the 50S ribosomal subunit. Forms a bridge to the 30S subunit in the 70S ribosome.

In terms of biological role, one of the primary rRNA binding proteins. Required for association of the 30S and 50S subunits to form the 70S ribosome, for tRNA binding and peptide bond formation. It has been suggested to have peptidyltransferase activity; this is somewhat controversial. Makes several contacts with the 16S rRNA in the 70S ribosome. This is Large ribosomal subunit protein uL2 from Pectobacterium carotovorum subsp. carotovorum (strain PC1).